A 188-amino-acid chain; its full sequence is Small ribosomal subunit protein bS18c (188 aa).

Residues 1 to 19 (MNNQSFNNFSQVNSNSSFF) show a composition bias toward low complexity. The tract at residues 1–79 (MNNQSFNNFS…TSNKRKVLSV (79 aa)) is disordered. A compositionally biased stretch (polar residues) spans 25–71 (NLQNTNLEMTNGTNPPSSFSKQTPQKRQSFGTNTNFSKGNSSRGSTS).

The protein belongs to the bacterial ribosomal protein bS18 family. In terms of assembly, part of the 30S ribosomal subunit.

It is found in the plastid. Its subcellular location is the chloroplast. In Tetradesmus obliquus (Green alga), this protein is Small ribosomal subunit protein bS18c.